The chain runs to 684 residues: Kelch repeat and BTB domain-containing protein 7 (684 aa).

Residues 1-27 form a disordered region; the sequence is MQSREDVPRSRRLASPRGGRRPKRISK. Residues 10 to 26 are compositionally biased toward basic residues; that stretch reads SRRLASPRGGRRPKRIS. The residue at position 29 (Ser-29) is a Phosphoserine. The 76-residue stretch at 63–138 folds into the BTB domain; the sequence is CDVTIEVVTP…CYTGRVSLSE (76 aa). Kelch repeat units follow at residues 386-435, 436-484, 486-523, 524-564, and 567-616; these read AVCV…YLNG, YIYI…VVQN, LYAV…VFND, EIYC…IVNH, and KLLL…CLCA. The segment at 630 to 666 is disordered; sequence ITEEDDARSESSTEWDLDGFSELDSESGSSSSFSDDE. The segment covering 631–654 has biased composition (acidic residues); the sequence is TEEDDARSESSTEWDLDGFSELDS. The short motif at 668–671 is the ATG8 interaction motif (AIM) element; it reads WVQV.

Core component of a BCR3 (BTB-CUL3-RBX1) E3 ubiquitin ligase complex, also named Cul3-RING ubiquitin ligase complex CUL3(KBTBD6/7), composed of CUL3, RBX1, KBTBD6 and KBTBD7. Interacts with GABARAP; the interaction is direct and is required for the ubiquitination of TIAM1. Interacts with GABARAPL1, GABARAPL2 and MAP1LC3B; the interaction is direct.

It is found in the cytoplasm. It localises to the nucleus. The protein operates within protein modification; protein ubiquitination. Functionally, as part of the CUL3(KBTBD6/7) E3 ubiquitin ligase complex functions as a substrate adapter for the RAC1 guanine exchange factor (GEF) TIAM1, mediating its 'Lys-48' ubiquitination and proteasomal degradation. By controlling this ubiquitination, regulates RAC1 signal transduction and downstream biological processes including the organization of the cytoskeleton, cell migration and cell proliferation. Ubiquitination of TIAM1 requires the membrane-associated protein GABARAP which may restrict locally the activity of the complex. The polypeptide is Kelch repeat and BTB domain-containing protein 7 (Homo sapiens (Human)).